The sequence spans 70 residues: Prokaryotic ubiquitin-like protein UBact (70 aa).

Composition is skewed to basic and acidic residues over residues 1-15 and 24-50; these read MPDQRQQERSRRKQG and TRHDPPPSEQESPVRRMLRDLRERDPG. Residues 1-70 form a disordered region; it reads MPDQRQQERS…RQQRREQSGE (70 aa). Glu70 is covalently cross-linked (Isoglutamyl lysine isopeptide (Glu-Lys) (interchain with K-? in acceptor proteins)).

It belongs to the ubiquitin-like protein UBact family.

In terms of biological role, may function as a protein modifier covalently attached to lysine residues of substrate proteins. This may serve to target the modified proteins for degradation by proteasomes. The chain is Prokaryotic ubiquitin-like protein UBact from Terrybacteria sp. (strain RIFCSPHIGHO2_01_FULL_58_15).